The sequence spans 432 residues: D-amino acid dehydrogenase (432 aa).

3-17 (VVILGSGVVGVTSAW) serves as a coordination point for FAD.

Belongs to the DadA oxidoreductase family. The cofactor is FAD.

The catalysed reaction is a D-alpha-amino acid + A + H2O = a 2-oxocarboxylate + AH2 + NH4(+). It functions in the pathway amino-acid degradation; D-alanine degradation; NH(3) and pyruvate from D-alanine: step 1/1. In terms of biological role, oxidative deamination of D-amino acids. The polypeptide is D-amino acid dehydrogenase (Salmonella arizonae (strain ATCC BAA-731 / CDC346-86 / RSK2980)).